A 288-amino-acid polypeptide reads, in one-letter code: Pantothenate synthetase (288 aa).

M27–H34 contributes to the ATP binding site. Catalysis depends on H34, which acts as the Proton donor. Residues Q58 and Q150 each contribute to the (R)-pantoate site. Beta-alanine is bound at residue Q58. Residues L173 and Y181–R184 contribute to the ATP site.

This sequence belongs to the pantothenate synthetase family. As to quaternary structure, homodimer.

The protein resides in the cytoplasm. The catalysed reaction is (R)-pantoate + beta-alanine + ATP = (R)-pantothenate + AMP + diphosphate + H(+). Its pathway is cofactor biosynthesis; (R)-pantothenate biosynthesis; (R)-pantothenate from (R)-pantoate and beta-alanine: step 1/1. Its function is as follows. Catalyzes the condensation of pantoate with beta-alanine in an ATP-dependent reaction via a pantoyl-adenylate intermediate. The polypeptide is Pantothenate synthetase (Tropheryma whipplei (strain TW08/27) (Whipple's bacillus)).